The sequence spans 148 residues: Thioredoxin H8 (148 aa).

Residues Met-1–Gln-145 enclose the Thioredoxin domain. Residues Cys-71 and Cys-74 each act as nucleophile in the active site. Cys-71 and Cys-74 form a disulfide bridge.

Belongs to the thioredoxin family. Plant H-type subfamily.

It localises to the cytoplasm. Probable thiol-disulfide oxidoreductase that may be involved in the redox regulation of a number of cytosolic enzymes. The polypeptide is Thioredoxin H8 (TRX8) (Arabidopsis thaliana (Mouse-ear cress)).